The chain runs to 498 residues: MRINPTTSGPGVSTLGRKNLGRIAQIIGPVLDVAFPPGKMPNIYNALVVKGRDTVGQQINVTCEVQQLLGNNRVRAVAMSATDGLMRGMEVIDTGAPLSVPVGGATLGRIFNVLGEPVDNLGPVDTRTTSPIHRSAPAFIQLDTKLSIFETGIKVVDLLAPYRRGGKIGLFGGAGVGKTVLIMELINNIAKAHGGVSVFGGVGERTREGNDLYMEMKESGVINEQNIAESKVALVYGQMNEPPGARMRVGLTALTMAEYFRDVNEQDVLLFIDNIFRFVQAGSEVSALLGRMPSAVGYQPTLSTEMGSLQERITSTKEGSITSIQAVYVPADDLTDPAPATTFAHLDATTVLSRGLAAKGIYPAVDPLDSTSTMLQPRIVGEEHYETAQRVKQTSQRYKELQDIIAILGLDELSEEDRLTVARARKIERFLSQPFFVAEVFTGSPGKYVGLAETIRGFQLILSGELDGLPEQAFYLVGNIDEATAKAMNFEVESKLKK.

172-179 (GGAGVGKT) contacts ATP.

This sequence belongs to the ATPase alpha/beta chains family. As to quaternary structure, F-type ATPases have 2 components, CF(1) - the catalytic core - and CF(0) - the membrane proton channel. CF(1) has five subunits: alpha(3), beta(3), gamma(1), delta(1), epsilon(1). CF(0) has four main subunits: a(1), b(1), b'(1) and c(9-12).

The protein localises to the plastid. The protein resides in the chloroplast thylakoid membrane. The catalysed reaction is ATP + H2O + 4 H(+)(in) = ADP + phosphate + 5 H(+)(out). In terms of biological role, produces ATP from ADP in the presence of a proton gradient across the membrane. The catalytic sites are hosted primarily by the beta subunits. The chain is ATP synthase subunit beta, chloroplastic from Galbulimima belgraveana (Northern pigeonberry ash).